Consider the following 390-residue polypeptide: Phosphoglycerate kinase (390 aa).

Substrate-binding positions include 21–23 (DLN), Arg36, 59–62 (HLGR), Arg114, and Arg147. ATP-binding positions include Lys198, Glu314, and 340–343 (GGDT).

It belongs to the phosphoglycerate kinase family. As to quaternary structure, monomer.

Its subcellular location is the cytoplasm. The catalysed reaction is (2R)-3-phosphoglycerate + ATP = (2R)-3-phospho-glyceroyl phosphate + ADP. It functions in the pathway carbohydrate degradation; glycolysis; pyruvate from D-glyceraldehyde 3-phosphate: step 2/5. In Buchnera aphidicola subsp. Acyrthosiphon pisum (strain APS) (Acyrthosiphon pisum symbiotic bacterium), this protein is Phosphoglycerate kinase (pgk).